A 224-amino-acid chain; its full sequence is ATP synthase subunit a (224 aa).

The next 6 helical transmembrane spans lie at 17–37, 72–92, 99–119, 125–145, 170–190, and 195–215; these read LSLN…IYWL, IFIS…FPYI, LTLT…YGWI, MFAH…MVCI, LLLT…VTFL, and IALL…FAVL.

Belongs to the ATPase A chain family. As to quaternary structure, F-type ATPases have 2 components, CF(1) - the catalytic core - and CF(0) - the membrane proton channel. CF(1) has five subunits: alpha(3), beta(3), gamma(1), delta(1), epsilon(1). CF(0) has three main subunits: a, b and c.

It localises to the mitochondrion inner membrane. Its function is as follows. Mitochondrial membrane ATP synthase (F(1)F(0) ATP synthase or Complex V) produces ATP from ADP in the presence of a proton gradient across the membrane which is generated by electron transport complexes of the respiratory chain. F-type ATPases consist of two structural domains, F(1) - containing the extramembraneous catalytic core and F(0) - containing the membrane proton channel, linked together by a central stalk and a peripheral stalk. During catalysis, ATP synthesis in the catalytic domain of F(1) is coupled via a rotary mechanism of the central stalk subunits to proton translocation. Key component of the proton channel; it may play a direct role in the translocation of protons across the membrane. In Drosophila mauritiana (Fruit fly), this protein is ATP synthase subunit a (mt:ATPase6).